The sequence spans 275 residues: tRNA pseudouridine synthase A (275 aa).

Residue D56 is the Nucleophile of the active site. Y114 is a binding site for substrate.

The protein belongs to the tRNA pseudouridine synthase TruA family. As to quaternary structure, homodimer.

The catalysed reaction is uridine(38/39/40) in tRNA = pseudouridine(38/39/40) in tRNA. In terms of biological role, formation of pseudouridine at positions 38, 39 and 40 in the anticodon stem and loop of transfer RNAs. The sequence is that of tRNA pseudouridine synthase A from Polynucleobacter asymbioticus (strain DSM 18221 / CIP 109841 / QLW-P1DMWA-1) (Polynucleobacter necessarius subsp. asymbioticus).